The chain runs to 411 residues: Putative ion-transport protein YfeO (411 aa).

11 consecutive transmembrane segments (helical) span residues 9–29, 54–74, 99–119, 149–169, 186–206, 223–243, 258–278, 296–316, 322–342, 343–363, and 386–406; these read MLLL…VLIA, DSPF…GLII, ALPG…SLGP, ILAS…AALI, LFAP…FFHP, IASG…AVWC, VLIL…GGPL, LGAG…VIAA, GGRI…LHAH, VEAV…VLVV, and LLCI…LLAA.

Belongs to the chloride channel (TC 2.A.49) family.

It localises to the cell membrane. The chain is Putative ion-transport protein YfeO from Salmonella schwarzengrund (strain CVM19633).